Here is a 256-residue protein sequence, read N- to C-terminus: 5-keto-4-deoxy-D-glucarate aldolase (256 aa).

Residue histidine 50 is the Proton acceptor of the active site. Residue glutamine 151 coordinates substrate. A Mg(2+)-binding site is contributed by glutamate 153. The substrate site is built by serine 178 and aspartate 179. Position 179 (aspartate 179) interacts with Mg(2+).

The protein belongs to the HpcH/HpaI aldolase family. KDGluc aldolase subfamily. As to quaternary structure, homohexamer; trimer of dimers. Requires Mg(2+) as cofactor.

The catalysed reaction is 5-dehydro-4-deoxy-D-glucarate = 2-hydroxy-3-oxopropanoate + pyruvate. The enzyme catalyses 2-dehydro-3-deoxy-D-glucarate = 2-hydroxy-3-oxopropanoate + pyruvate. It functions in the pathway carbohydrate acid metabolism; galactarate degradation; D-glycerate from galactarate: step 2/3. Catalyzes the reversible retro-aldol cleavage of both 5-keto-4-deoxy-D-glucarate and 2-keto-3-deoxy-D-glucarate to pyruvate and tartronic semialdehyde. The polypeptide is 5-keto-4-deoxy-D-glucarate aldolase (Escherichia coli O157:H7 (strain EC4115 / EHEC)).